Here is a 152-residue protein sequence, read N- to C-terminus: UPF0266 membrane protein YobD (152 aa).

The next 3 membrane-spanning stretches (helical) occupy residues 6–26 (LVLILFIAALLAFAIYDQFIM), 45–65 (IDSVIFVGLIVILIYNNVTNH), and 67–87 (ALITTWLLSALALMGFYIFWI).

Belongs to the UPF0266 family.

The protein localises to the cell inner membrane. In Shigella dysenteriae serotype 1 (strain Sd197), this protein is UPF0266 membrane protein YobD.